A 197-amino-acid chain; its full sequence is Nucleoside triphosphate pyrophosphatase (197 aa).

The active-site Proton acceptor is the aspartate 72.

It belongs to the Maf family. Requires a divalent metal cation as cofactor.

It is found in the cytoplasm. It carries out the reaction a ribonucleoside 5'-triphosphate + H2O = a ribonucleoside 5'-phosphate + diphosphate + H(+). The enzyme catalyses a 2'-deoxyribonucleoside 5'-triphosphate + H2O = a 2'-deoxyribonucleoside 5'-phosphate + diphosphate + H(+). Nucleoside triphosphate pyrophosphatase. May have a dual role in cell division arrest and in preventing the incorporation of modified nucleotides into cellular nucleic acids. In Corynebacterium glutamicum (strain ATCC 13032 / DSM 20300 / JCM 1318 / BCRC 11384 / CCUG 27702 / LMG 3730 / NBRC 12168 / NCIMB 10025 / NRRL B-2784 / 534), this protein is Nucleoside triphosphate pyrophosphatase.